The sequence spans 82 residues: UPF0512 protein P (82 aa).

It belongs to the UPF0512 family.

In Dictyostelium discoideum (Social amoeba), this protein is UPF0512 protein P.